The primary structure comprises 423 residues: Galactosylceramide sulfotransferase (423 aa).

At Met-1–Lys-14 the chain is on the cytoplasmic side. Residues Gly-15–Pro-35 form a helical; Signal-anchor for type II membrane protein membrane-spanning segment. The Lumenal portion of the chain corresponds to Pro-36–Trp-423. Residues Asn-66 and Asn-312 are each glycosylated (N-linked (GlcNAc...) asparagine).

The protein belongs to the galactose-3-O-sulfotransferase family. As to expression, expressed in kidney proximal tubule, gastric mucosa and adenocarcinoma. Highly expressed in renal cell carcinoma cell lines.

It localises to the golgi apparatus membrane. It carries out the reaction a beta-D-galactosyl-(1&lt;-&gt;1')-N-acylsphing-4-enine + 3'-phosphoadenylyl sulfate = an N-acyl-1-beta-D-(3-O-sulfo)-galactosyl-sphing-4-enine + adenosine 3',5'-bisphosphate + H(+). It catalyses the reaction a 1-O-alkyl-2-acyl-3-O-(beta-D-galactosyl)-sn-glycerol + 3'-phosphoadenylyl sulfate = a 1-O-alkyl-2-acyl-3-(beta-D-3-sulfogalactosyl)-sn-glycerol + adenosine 3',5'-bisphosphate + H(+). The enzyme catalyses a beta-D-Gal-(1&lt;-&gt;1')-ceramide + 3'-phosphoadenylyl sulfate = 1-(3-O-sulfo-beta-D-galactosyl)-ceramide + adenosine 3',5'-bisphosphate + H(+). The catalysed reaction is a 1,2-diacyl-3-O-(beta-D-galactosyl)-sn-glycerol + 3'-phosphoadenylyl sulfate = 1,2-diacyl-3-(3-O-sulfo-beta-D-galactosyl)-sn-glycerol + adenosine 3',5'-bisphosphate + H(+). It carries out the reaction a beta-D-Gal-(1-&gt;4)-beta-D-Glc-(1&lt;-&gt;1)-Cer(d18:1(4E)) + 3'-phosphoadenylyl sulfate = beta-D-3-sulfogalactosyl-(1-&gt;4)-beta-D-glucosyl-(1&lt;-&gt;1')-N-acylsphing-4-enine + adenosine 3',5'-bisphosphate + H(+). It participates in lipid metabolism; sphingolipid metabolism. Catalyzes the transfer of a sulfate group to position 3 of non-reducing beta-galactosyl residues in glycerolipids and sphingolipids, therefore participates in the biosynthesis of sulfoglycolipids. Catalyzes the synthesis of galactosylceramide sulfate (sulfatide), a major lipid component of the myelin sheath and of monogalactosylalkylacylglycerol sulfate (seminolipid), present in spermatocytes. Seems to prefer beta-glycosides at the non-reducing termini of sugar chains attached to a lipid moiety. Also acts on lactosylceramide, galactosyl 1-alkyl-2-sn-glycerol and galactosyl diacylglycerol (in vitro). The protein is Galactosylceramide sulfotransferase of Homo sapiens (Human).